The primary structure comprises 504 residues: Cytochrome P450 2S1 (504 aa).

A heme-binding site is contributed by cysteine 440.

It belongs to the cytochrome P450 family. The cofactor is heme. In terms of tissue distribution, expressed at higher levels in extrahepatic tissues including trachea, lung, stomach, small intestine, colon, kidney, breast, placenta and spleen. Expressed in peripheral blood leukocytes. Constitutively expressed in skin (at protein level).

It localises to the endoplasmic reticulum membrane. Its subcellular location is the microsome membrane. The catalysed reaction is all-trans-retinoate + reduced [NADPH--hemoprotein reductase] + O2 = all-trans-5,6-epoxyretinoate + oxidized [NADPH--hemoprotein reductase] + H2O + H(+). It carries out the reaction all-trans-retinoate + reduced [NADPH--hemoprotein reductase] + O2 = all-trans-4-hydroxyretinoate + oxidized [NADPH--hemoprotein reductase] + H2O + H(+). The enzyme catalyses (5S)-hydroperoxy-(6E,8Z,11Z,14Z)-eicosatetraenoate = 5-oxo-(6E,8Z,11Z,14Z)-eicosatetraenoate + H2O. It catalyses the reaction (12S)-hydroperoxy-(5Z,8Z,10E,14Z)-eicosatetraenoate = 12-oxo-(5Z,8Z,10E,14Z)-eicosatetraenoate + H2O. The catalysed reaction is (15S)-hydroperoxy-(5Z,8Z,11Z,13E)-eicosatetraenoate = 15-oxo-(5Z,8Z,11Z,13E)-eicosatetraenoate + H2O. It carries out the reaction prostaglandin H2 = thromboxane A2. The enzyme catalyses prostaglandin H2 = (12S)-hydroxy-(5Z,8E,10E)-heptadecatrienoate + malonaldehyde. It catalyses the reaction (13S)-hydroperoxy-(9Z,11E)-octadecadienoate = 13-oxo-(9Z,11E)-octadecadienoate + H2O. The protein operates within lipid metabolism; fatty acid metabolism. In terms of biological role, a cytochrome P450 monooxygenase involved in the metabolism of retinoids and eicosanoids. In epidermis, may contribute to the oxidative metabolism of all-trans-retinoic acid. For this activity, uses molecular oxygen inserting one oxygen atom into a substrate, and reducing the second into a water molecule, with two electrons provided by NADPH via cytochrome P450 reductase (NADPH--hemoprotein reductase). Additionally, displays peroxidase and isomerase activities toward various oxygenated eicosanoids such as prostaglandin H2 (PGH2) and hydroperoxyeicosatetraenoates (HPETEs). Independently of cytochrome P450 reductase, NADPH, and O2, catalyzes the breakdown of PGH2 to hydroxyheptadecatrienoic acid (HHT) and malondialdehyde (MDA), which is known to act as a mediator of DNA damage. The protein is Cytochrome P450 2S1 of Homo sapiens (Human).